Here is a 71-residue protein sequence, read N- to C-terminus: Cell division protein ZapB (71 aa).

Residues 5 to 67 (LEVLEQLESK…RALLGKMEQM (63 aa)) are a coiled coil.

Belongs to the ZapB family. As to quaternary structure, homodimer. The ends of the coiled-coil dimer bind to each other, forming polymers. Interacts with FtsZ.

Its subcellular location is the cytoplasm. Functionally, non-essential, abundant cell division factor that is required for proper Z-ring formation. It is recruited early to the divisome by direct interaction with FtsZ, stimulating Z-ring assembly and thereby promoting cell division earlier in the cell cycle. Its recruitment to the Z-ring requires functional FtsA or ZipA. This Aeromonas salmonicida (strain A449) protein is Cell division protein ZapB.